The following is a 205-amino-acid chain: Small ribosomal subunit protein uS4 (205 aa).

Over residues 1–16 (MSKRESSKYKIDRRMG) the composition is skewed to basic and acidic residues. The interval 1-46 (MSKRESSKYKIDRRMGENIWGRPKSPVNRREYGPGQHGQRRKGKLS) is disordered. Positions 94 to 157 (SRLDAIVYRA…KQLVIVLEAV (64 aa)) constitute an S4 RNA-binding domain.

This sequence belongs to the universal ribosomal protein uS4 family. Part of the 30S ribosomal subunit. Contacts protein S5. The interaction surface between S4 and S5 is involved in control of translational fidelity.

One of the primary rRNA binding proteins, it binds directly to 16S rRNA where it nucleates assembly of the body of the 30S subunit. Functionally, with S5 and S12 plays an important role in translational accuracy. In Rhizobium leguminosarum bv. trifolii (strain WSM2304), this protein is Small ribosomal subunit protein uS4.